Consider the following 743-residue polypeptide: ABC-type transporter claG (743 aa).

Residues Asn-4 and Asn-30 are each glycosylated (N-linked (GlcNAc...) asparagine). A helical membrane pass occupies residues 124–144 (SILLDIFLVIVVSWPFPFAWI). An N-linked (GlcNAc...) asparagine glycan is attached at Asn-159. Positions 200–439 (VEFSGISMRP…FQDAGYTFPL (240 aa)) constitute an ABC transporter domain. 234-241 (GPSGSGKS) is an ATP binding site. The next 5 membrane-spanning stretches (helical) occupy residues 507–527 (YPSF…IGLS), 560–580 (GMLL…KTFG), 611–631 (IFLS…PIVS), 636–656 (LIVN…ISAI), and 661–681 (NGPL…GCAP).

Belongs to the ABC transporter superfamily. ABCG family.

The protein resides in the membrane. ABC-type transporter; part of the cla gene cluster that produces clavatol and ortho-quinone methide. The clavatol biosynthesis cluster cla and the terrestric acid cluster tra are both involved in the production of peniphenones and penilactones. This chain is ABC-type transporter claG, found in Penicillium crustosum (Blue mold fungus).